A 150-amino-acid polypeptide reads, in one-letter code: MKVLAQNRRARHDYQILETYEAGIVLSGDEVKSAKEGNVQLRDAFVRVENGEAWLYNMHIAPYEKTGEPFRGDSKRKRKLLLHKREINKILGYLTQKGLTAIPLSMYVNDRGFIKVSIGVAKGKKMVDKRQTIKERDIERELRREGKIRY.

This sequence belongs to the SmpB family.

The protein resides in the cytoplasm. In terms of biological role, required for rescue of stalled ribosomes mediated by trans-translation. Binds to transfer-messenger RNA (tmRNA), required for stable association of tmRNA with ribosomes. tmRNA and SmpB together mimic tRNA shape, replacing the anticodon stem-loop with SmpB. tmRNA is encoded by the ssrA gene; the 2 termini fold to resemble tRNA(Ala) and it encodes a 'tag peptide', a short internal open reading frame. During trans-translation Ala-aminoacylated tmRNA acts like a tRNA, entering the A-site of stalled ribosomes, displacing the stalled mRNA. The ribosome then switches to translate the ORF on the tmRNA; the nascent peptide is terminated with the 'tag peptide' encoded by the tmRNA and targeted for degradation. The ribosome is freed to recommence translation, which seems to be the essential function of trans-translation. The sequence is that of SsrA-binding protein from Coprothermobacter proteolyticus (strain ATCC 35245 / DSM 5265 / OCM 4 / BT).